Consider the following 353-residue polypeptide: MLYSLLYGYFNINLFQYLTFRAGLGFFIAFFLTLFLMPKFILWAKAKKANQPISSFVPSHQNKKDTPTMGGIVFVFATIIASLLCASLGNPYVLLGIIVLVGFSFVGFRDDYTKINQQSNAGMSAKMKFGMLFVLSLVVSVLLSVKGLDTFLYAPFLKNPLFEMPTALAVGFWVLVFLSASNAVNLTDGLDGLASVPSIFTLLSLSIFVYVAGNAEFSKYLLYPKVIDVGELFVISLALIGSLFGFLWYNCNPASVFMGDSGSLALGGFIAYNAIVSHNEILLVLMGSIFVIETLSVILQVGSYKTRKKRLFLMAPIHHHFEQKGWAENKVIVRFWIISMLSNLVALLSLKVR.

10 helical membrane passes run 24 to 44 (LGFF…ILWA), 66 to 86 (TPTM…LLCA), 88 to 108 (LGNP…FVGF), 129 to 149 (FGML…KGLD), 160 to 180 (PLFE…FLSA), 192 to 212 (GLAS…VYVA), 229 to 249 (VGEL…FLWY), 256 to 276 (VFMG…NAIV), 281 to 301 (ILLV…ILQV), and 330 to 350 (KVIV…LLSL).

Belongs to the glycosyltransferase 4 family. MraY subfamily. Mg(2+) is required as a cofactor.

The protein localises to the cell inner membrane. The enzyme catalyses UDP-N-acetyl-alpha-D-muramoyl-L-alanyl-gamma-D-glutamyl-meso-2,6-diaminopimeloyl-D-alanyl-D-alanine + di-trans,octa-cis-undecaprenyl phosphate = di-trans,octa-cis-undecaprenyl diphospho-N-acetyl-alpha-D-muramoyl-L-alanyl-D-glutamyl-meso-2,6-diaminopimeloyl-D-alanyl-D-alanine + UMP. It functions in the pathway cell wall biogenesis; peptidoglycan biosynthesis. Functionally, catalyzes the initial step of the lipid cycle reactions in the biosynthesis of the cell wall peptidoglycan: transfers peptidoglycan precursor phospho-MurNAc-pentapeptide from UDP-MurNAc-pentapeptide onto the lipid carrier undecaprenyl phosphate, yielding undecaprenyl-pyrophosphoryl-MurNAc-pentapeptide, known as lipid I. The chain is Phospho-N-acetylmuramoyl-pentapeptide-transferase from Helicobacter acinonychis (strain Sheeba).